A 395-amino-acid polypeptide reads, in one-letter code: D-serine dehydratase (395 aa).

Position 46 is an N6-(pyridoxal phosphate)lysine (Lys-46). The pyridoxal 5'-phosphate site is built by Tyr-184, Tyr-191, Thr-232, Gly-254, and Asn-255. The Zn(2+) site is built by His-365 and Cys-367.

Belongs to the DSD1 family. Pyridoxal 5'-phosphate is required as a cofactor. Requires Zn(2+) as cofactor.

It catalyses the reaction D-serine = pyruvate + NH4(+). Catalyzes the conversion of D-serine to pyruvate and ammonia. Plays a role in D-serine detoxification. The chain is D-serine dehydratase from Dictyostelium discoideum (Social amoeba).